Here is a 308-residue protein sequence, read N- to C-terminus: D-alanine--D-alanine ligase (308 aa).

Positions 102–302 (KTVAKSAGIP…FGALLSWMVE (201 aa)) constitute an ATP-grasp domain. 128 to 183 (PMEPPYVVKPVAEGSSFGVVIVREGQSHPPQVLGSAEWGYGERVMVERYIPGRELT) lines the ATP pocket. Mg(2+) is bound by residues D252, E269, and N271.

The protein belongs to the D-alanine--D-alanine ligase family. Requires Mg(2+) as cofactor. It depends on Mn(2+) as a cofactor.

It localises to the cytoplasm. It carries out the reaction 2 D-alanine + ATP = D-alanyl-D-alanine + ADP + phosphate + H(+). It participates in cell wall biogenesis; peptidoglycan biosynthesis. Functionally, cell wall formation. This chain is D-alanine--D-alanine ligase, found in Chelativorans sp. (strain BNC1).